The chain runs to 260 residues: DNA repair protein RecO (260 aa).

The protein belongs to the RecO family.

Functionally, involved in DNA repair and RecF pathway recombination. This chain is DNA repair protein RecO, found in Desulfosudis oleivorans (strain DSM 6200 / JCM 39069 / Hxd3) (Desulfococcus oleovorans).